A 517-amino-acid polypeptide reads, in one-letter code: Crotonobetaine/carnitine--CoA ligase (517 aa).

Belongs to the ATP-dependent AMP-binding enzyme family.

It carries out the reaction 4-(trimethylamino)butanoate + ATP + CoA = 4-(trimethylamino)butanoyl-CoA + AMP + diphosphate. It catalyses the reaction crotonobetaine + ATP + CoA = crotonobetainyl-CoA + AMP + diphosphate. The enzyme catalyses (R)-carnitine + ATP + CoA = (R)-carnitinyl-CoA + AMP + diphosphate. It functions in the pathway amine and polyamine metabolism; carnitine metabolism. In terms of biological role, catalyzes the transfer of CoA to carnitine, generating the initial carnitinyl-CoA needed for the CaiB reaction cycle. Also has activity toward crotonobetaine and gamma-butyrobetaine. The polypeptide is Crotonobetaine/carnitine--CoA ligase (Escherichia coli (strain ATCC 8739 / DSM 1576 / NBRC 3972 / NCIMB 8545 / WDCM 00012 / Crooks)).